The following is a 74-amino-acid chain: Putative sulfur carrier protein NMA0882 (74 aa).

The active-site Cysteine persulfide intermediate is Cys13.

It belongs to the sulfur carrier protein TusA family.

This is Putative sulfur carrier protein NMA0882 from Neisseria meningitidis serogroup A / serotype 4A (strain DSM 15465 / Z2491).